A 150-amino-acid polypeptide reads, in one-letter code: 3-hydroxyacyl-[acyl-carrier-protein] dehydratase FabZ (150 aa).

His53 is an active-site residue.

Belongs to the thioester dehydratase family. FabZ subfamily.

It is found in the cytoplasm. It carries out the reaction a (3R)-hydroxyacyl-[ACP] = a (2E)-enoyl-[ACP] + H2O. Functionally, involved in unsaturated fatty acids biosynthesis. Catalyzes the dehydration of short chain beta-hydroxyacyl-ACPs and long chain saturated and unsaturated beta-hydroxyacyl-ACPs. The sequence is that of 3-hydroxyacyl-[acyl-carrier-protein] dehydratase FabZ from Proteus mirabilis (strain HI4320).